We begin with the raw amino-acid sequence, 300 residues long: ETS homologous factor (300 aa).

The region spanning 29–115 (STCNVSSGFF…SNLQHLKWNG (87 aa)) is the PNT domain. The segment at 183-202 (ESPDMKKEQDPPAKCHTKKH) is disordered. The span at 185–195 (PDMKKEQDPPA) shows a compositional bias: basic and acidic residues. The ETS DNA-binding region spans 207 to 289 (THLWEFIRDI…DGRRLVYKFG (83 aa)).

Belongs to the ETS family. As to expression, expressed exclusively in tissues with a high content of epithelial cells. Highly expressed in salivary gland, mammary gland, prostate, and lung. Weakly expressed in kidney and colon. Not detected in heart, brain, placenta, liver, skeletal muscle, spleen, thymus, testis, ovary, small intestine or peripheral blood leukocytes.

It localises to the nucleus. Functionally, transcriptional activator that may play a role in regulating epithelial cell differentiation and proliferation. May act as a repressor for a specific subset of ETS/AP-1-responsive genes and as a modulator of the nuclear response to mitogen-activated protein kinase signaling cascades. Binds to DNA sequences containing the consensus nucleotide core sequence GGAA. Involved in regulation of TNFRSF10B/DR5 expression through Ets-binding sequences on the TNFRSF10B/DR5 promoter. May contribute to development and carcinogenesis by acting as a tumor suppressor gene or anti-oncogene. The polypeptide is ETS homologous factor (Homo sapiens (Human)).